The primary structure comprises 615 residues: DNA mismatch repair protein MutL (615 aa).

The tract at residues 362-397 (HFAEPAVREPVAPRYTPAPASGSRPAAPWPNAQPGY) is disordered. Positions 378-391 (PAPASGSRPAAPWP) are enriched in low complexity.

Belongs to the DNA mismatch repair MutL/HexB family.

In terms of biological role, this protein is involved in the repair of mismatches in DNA. It is required for dam-dependent methyl-directed DNA mismatch repair. May act as a 'molecular matchmaker', a protein that promotes the formation of a stable complex between two or more DNA-binding proteins in an ATP-dependent manner without itself being part of a final effector complex. In Escherichia coli O17:K52:H18 (strain UMN026 / ExPEC), this protein is DNA mismatch repair protein MutL.